A 231-amino-acid polypeptide reads, in one-letter code: Uracil-DNA glycosylase (231 aa).

The active-site Proton acceptor is Asp-71.

Belongs to the uracil-DNA glycosylase (UDG) superfamily. UNG family.

The protein localises to the cytoplasm. The enzyme catalyses Hydrolyzes single-stranded DNA or mismatched double-stranded DNA and polynucleotides, releasing free uracil.. In terms of biological role, excises uracil residues from the DNA which can arise as a result of misincorporation of dUMP residues by DNA polymerase or due to deamination of cytosine. The polypeptide is Uracil-DNA glycosylase (Pseudomonas aeruginosa (strain ATCC 15692 / DSM 22644 / CIP 104116 / JCM 14847 / LMG 12228 / 1C / PRS 101 / PAO1)).